Consider the following 124-residue polypeptide: Large ribosomal subunit protein bL12 (124 aa).

This sequence belongs to the bacterial ribosomal protein bL12 family. Homodimer. Part of the ribosomal stalk of the 50S ribosomal subunit. Forms a multimeric L10(L12)X complex, where L10 forms an elongated spine to which 2 to 4 L12 dimers bind in a sequential fashion. Binds GTP-bound translation factors.

Its function is as follows. Forms part of the ribosomal stalk which helps the ribosome interact with GTP-bound translation factors. Is thus essential for accurate translation. The protein is Large ribosomal subunit protein bL12 of Wolinella succinogenes (strain ATCC 29543 / DSM 1740 / CCUG 13145 / JCM 31913 / LMG 7466 / NCTC 11488 / FDC 602W) (Vibrio succinogenes).